The sequence spans 548 residues: Probable malate:quinone oxidoreductase (548 aa).

Belongs to the MQO family. The cofactor is FAD.

It carries out the reaction (S)-malate + a quinone = a quinol + oxaloacetate. Its pathway is carbohydrate metabolism; tricarboxylic acid cycle; oxaloacetate from (S)-malate (quinone route): step 1/1. In Escherichia coli O6:K15:H31 (strain 536 / UPEC), this protein is Probable malate:quinone oxidoreductase.